Here is a 296-residue protein sequence, read N- to C-terminus: Pre-mRNA-splicing factor CWC23 (296 aa).

One can recognise a J domain in the interval aspartate 14–valine 86.

This sequence belongs to the DnaJ family. Associated with the spliceosome.

The protein resides in the cytoplasm. It is found in the nucleus. Involved in pre-mRNA splicing. May be involved in endoplasmic reticulum-associated protein degradation (ERAD) and required for growth at low and high temperatures. The protein is Pre-mRNA-splicing factor CWC23 (CWC23) of Candida glabrata (strain ATCC 2001 / BCRC 20586 / JCM 3761 / NBRC 0622 / NRRL Y-65 / CBS 138) (Yeast).